A 192-amino-acid chain; its full sequence is UPF0312 protein YE1254 (192 aa).

Residues 1–23 (MFNKTLLGLTVGALMFTAGSAVA) form the signal peptide.

Belongs to the UPF0312 family. Type 1 subfamily.

Its subcellular location is the periplasm. In Yersinia enterocolitica serotype O:8 / biotype 1B (strain NCTC 13174 / 8081), this protein is UPF0312 protein YE1254.